A 449-amino-acid polypeptide reads, in one-letter code: UDP-N-acetylmuramate--L-alanine ligase (449 aa).

110–116 (GTHGKTT) contacts ATP.

This sequence belongs to the MurCDEF family.

The protein localises to the cytoplasm. The enzyme catalyses UDP-N-acetyl-alpha-D-muramate + L-alanine + ATP = UDP-N-acetyl-alpha-D-muramoyl-L-alanine + ADP + phosphate + H(+). It participates in cell wall biogenesis; peptidoglycan biosynthesis. Functionally, cell wall formation. This chain is UDP-N-acetylmuramate--L-alanine ligase, found in Desulfitobacterium hafniense (strain Y51).